The following is a 94-amino-acid chain: uncharacterized protein (94 aa).

Residues 1-26 form the signal peptide; it reads MNDQRDQAVPWATGLAVAGFVAAVIA. Helical transmembrane passes span 42-62 and 71-91; these read LLAV…LWGW and FVLG…ALTL.

The protein resides in the cell membrane. This is an uncharacterized protein from Mycobacterium tuberculosis (strain CDC 1551 / Oshkosh).